The sequence spans 226 residues: 2-C-methyl-D-erythritol 4-phosphate cytidylyltransferase (226 aa).

Belongs to the IspD/TarI cytidylyltransferase family. IspD subfamily.

The catalysed reaction is 2-C-methyl-D-erythritol 4-phosphate + CTP + H(+) = 4-CDP-2-C-methyl-D-erythritol + diphosphate. Its pathway is isoprenoid biosynthesis; isopentenyl diphosphate biosynthesis via DXP pathway; isopentenyl diphosphate from 1-deoxy-D-xylulose 5-phosphate: step 2/6. Functionally, catalyzes the formation of 4-diphosphocytidyl-2-C-methyl-D-erythritol from CTP and 2-C-methyl-D-erythritol 4-phosphate (MEP). This chain is 2-C-methyl-D-erythritol 4-phosphate cytidylyltransferase, found in Bacillus thuringiensis (strain Al Hakam).